Here is an 84-residue protein sequence, read N- to C-terminus: Putative UPF0320 protein YNL337W (84 aa).

It belongs to the UPF0320 family.

The chain is Putative UPF0320 protein YNL337W from Saccharomyces cerevisiae (strain ATCC 204508 / S288c) (Baker's yeast).